The primary structure comprises 2211 residues: Nonribosomal peptide synthetase 13 (2211 aa).

The adenylation 1 stretch occupies residues 76–475 (TYAELDSLSD…IEHHLQLTLP (400 aa)). Positions 594-671 (PPSTPKEATI…EQSKRAGLIQ (78 aa)) constitute a Carrier 1 domain. Ser-631 bears the O-(pantetheine 4'-phosphoryl)serine mark. The tract at residues 710 to 975 (EDIYPCTALQ…IATVPTRIRV (266 aa)) is condensation 1. The tract at residues 1169–1563 (TYRELWAHSS…LGAVEASVMR (395 aa)) is adenylation 2. The region spanning 1677–1756 (PMSDDNERRL…RSRHLITEQA (80 aa)) is the Carrier 2 domain. Ser-1714 is modified (O-(pantetheine 4'-phosphoryl)serine). Positions 1814-2069 (HFQFDLSGAV…CTNYIPYRLS (256 aa)) are condensation 2.

This sequence belongs to the NRP synthetase family.

It carries out the reaction L-proline + L-tryptophan + 2 ATP = brevianamide F + 2 AMP + 2 diphosphate + 2 H(+). It functions in the pathway mycotoxin biosynthesis. Nonribosomal peptide synthetase; part of the gene cluster that mediates the biosynthesis of fumitremorgins, indole alkaloids that carry not only intriguing chemical structures, but also interesting biological and pharmacological activities. The biosynthesis of fumitremorgin-type alkaloids begins by condensation of the two amino acids L-tryptophan and L-proline to brevianamide F, catalyzed by the non-ribosomal peptide synthetase ftmA. Brevianamide F is then prenylated by the prenyltransferase ftmPT1/ftmB in the presence of dimethylallyl diphosphate, resulting in the formation of tryprostatin B. The three cytochrome P450 monooxygenases, ftmP450-1/ftmC, ftmP450-2/ftmE and ftmP450-3/FtmG, are responsible for the conversion of tryprostatin B to 6-hydroxytryprostatin B, tryprostatin A to fumitremorgin C and fumitremorgin C to 12,13-dihydroxyfumitremorgin C, respectively. The putative methyltransferase ftmMT/ftmD is expected for the conversion of 6-hydroxytryprostatin B to tryprostatin A. FtmPT2/FtmH catalyzes the prenylation of 12,13-dihydroxyfumitre-morgin C in the presence of dimethylallyl diphosphate, resulting in the formation of fumitremorgin B. Fumitremorgin B is further converted to verruculogen by ftmOx1/ftmF via the insertion of an endoperoxide bond between the two prenyl moieties. In some fungal species, verruculogen is further converted to fumitremorgin A, but the enzymes involved in this step have not been identified yet. In Aspergillus fumigatus (Neosartorya fumigata), this protein is Nonribosomal peptide synthetase 13.